Here is a 311-residue protein sequence, read N- to C-terminus: 2-phospho-L-lactate transferase (311 aa).

Positions 52 and 91 each coordinate 7,8-didemethyl-8-hydroxy-5-deazariboflavin.

The protein belongs to the CofD family. In terms of assembly, homodimer. It depends on Mg(2+) as a cofactor.

The catalysed reaction is (2S)-lactyl-2-diphospho-5'-guanosine + 7,8-didemethyl-8-hydroxy-5-deazariboflavin = oxidized coenzyme F420-0 + GMP + H(+). The protein operates within cofactor biosynthesis; coenzyme F420 biosynthesis. Inhibited by EDTA in vitro. Catalyzes the transfer of the 2-phospholactate moiety from (2S)-lactyl-2-diphospho-5'-guanosine to 7,8-didemethyl-8-hydroxy-5-deazariboflavin (FO) with the formation of oxidized coenzyme F420-0 and GMP. In Methanocaldococcus jannaschii (strain ATCC 43067 / DSM 2661 / JAL-1 / JCM 10045 / NBRC 100440) (Methanococcus jannaschii), this protein is 2-phospho-L-lactate transferase.